The chain runs to 319 residues: Homoserine kinase (319 aa).

100–110 (PLSSGMGSSAS) is an ATP binding site.

This sequence belongs to the GHMP kinase family. Homoserine kinase subfamily.

It is found in the cytoplasm. It carries out the reaction L-homoserine + ATP = O-phospho-L-homoserine + ADP + H(+). The protein operates within amino-acid biosynthesis; L-threonine biosynthesis; L-threonine from L-aspartate: step 4/5. Its function is as follows. Catalyzes the ATP-dependent phosphorylation of L-homoserine to L-homoserine phosphate. The polypeptide is Homoserine kinase (Chloroherpeton thalassium (strain ATCC 35110 / GB-78)).